A 118-amino-acid chain; its full sequence is V-type proton ATPase subunit G 1 (118 aa).

N-acetylalanine is present on A2. Residues 19-42 (AEKVSEARKRKNRRLKQAKEEAQA) form a disordered region.

This sequence belongs to the V-ATPase G subunit family. As to quaternary structure, V-ATPase is a heteromultimeric enzyme made up of two complexes: the ATP-hydrolytic V1 complex and the proton translocation V0 complex. The V1 complex consists of three catalytic AB heterodimers that form a heterohexamer, three peripheral stalks each consisting of EG heterodimers, one central rotor including subunits D and F, and the regulatory subunits C and H. The proton translocation complex V0 consists of the proton transport subunit a, a ring of proteolipid subunits c9c'', rotary subunit d, subunits e and f, and the accessory subunits ATP6AP1/Ac45 and ATP6AP2/PRR. Brain, heart, kidney and spleen.

It is found in the apical cell membrane. In terms of biological role, subunit of the V1 complex of vacuolar(H+)-ATPase (V-ATPase), a multisubunit enzyme composed of a peripheral complex (V1) that hydrolyzes ATP and a membrane integral complex (V0) that translocates protons. V-ATPase is responsible for acidifying and maintaining the pH of intracellular compartments and in some cell types, is targeted to the plasma membrane, where it is responsible for acidifying the extracellular environment. In aerobic conditions, involved in intracellular iron homeostasis, thus triggering the activity of Fe(2+) prolyl hydroxylase (PHD) enzymes, and leading to HIF1A hydroxylation and subsequent proteasomal degradation. This Bos taurus (Bovine) protein is V-type proton ATPase subunit G 1 (ATP6V1G1).